A 219-amino-acid polypeptide reads, in one-letter code: PRELI domain-containing protein 1, mitochondrial (219 aa).

The 139-residue stretch at 36–174 folds into the PRELI/MSF1 domain; the sequence is TEDIVHREVT…ILAKLQGEAP (139 aa).

Forms a complex with TRIAP1 in the mitochondrion intermembrane space. Interacts with OPA1 and AIFM1. In terms of tissue distribution, highly expressed in fetal liver; less expressed in fetal brain, lung, and kidney. At the adult stage, expression is drastically reduced in the liver but highly expressed in the spleen, brain, lung, lymph nodes and peripheral blood leukocytes.

The protein resides in the mitochondrion. Its subcellular location is the mitochondrion intermembrane space. The catalysed reaction is a 1,2-diacyl-sn-glycero-3-phosphate(in) = a 1,2-diacyl-sn-glycero-3-phosphate(out). Functionally, involved in the modulation of the mitochondrial apoptotic pathway by ensuring the accumulation of cardiolipin (CL) in mitochondrial membranes. In vitro, the TRIAP1:PRELID1 complex mediates the transfer of phosphatidic acid (PA) between liposomes and probably functions as a PA transporter across the mitochondrion intermembrane space to provide PA for CL synthesis in the inner membrane. Regulates the mitochondrial apoptotic pathway in primary Th cells. Regulates Th cell differentiation by down-regulating STAT6 thereby reducing IL-4-induced Th2 cell number. May be important for the development of vital and immunocompetent organs. In Homo sapiens (Human), this protein is PRELI domain-containing protein 1, mitochondrial (PRELID1).